Here is a 103-residue protein sequence, read N- to C-terminus: Pyrimidine/purine nucleoside phosphorylase (103 aa).

It belongs to the nucleoside phosphorylase PpnP family.

It catalyses the reaction a purine D-ribonucleoside + phosphate = a purine nucleobase + alpha-D-ribose 1-phosphate. The enzyme catalyses adenosine + phosphate = alpha-D-ribose 1-phosphate + adenine. It carries out the reaction cytidine + phosphate = cytosine + alpha-D-ribose 1-phosphate. The catalysed reaction is guanosine + phosphate = alpha-D-ribose 1-phosphate + guanine. It catalyses the reaction inosine + phosphate = alpha-D-ribose 1-phosphate + hypoxanthine. The enzyme catalyses thymidine + phosphate = 2-deoxy-alpha-D-ribose 1-phosphate + thymine. It carries out the reaction uridine + phosphate = alpha-D-ribose 1-phosphate + uracil. The catalysed reaction is xanthosine + phosphate = alpha-D-ribose 1-phosphate + xanthine. Its function is as follows. Catalyzes the phosphorolysis of diverse nucleosides, yielding D-ribose 1-phosphate and the respective free bases. Can use uridine, adenosine, guanosine, cytidine, thymidine, inosine and xanthosine as substrates. Also catalyzes the reverse reactions. In Shewanella frigidimarina (strain NCIMB 400), this protein is Pyrimidine/purine nucleoside phosphorylase.